The following is a 111-amino-acid chain: Photosystem II reaction center Psb28 protein (111 aa).

This sequence belongs to the Psb28 family. Part of the photosystem II complex.

It localises to the cellular thylakoid membrane. The sequence is that of Photosystem II reaction center Psb28 protein from Gloeothece citriformis (strain PCC 7424) (Cyanothece sp. (strain PCC 7424)).